A 156-amino-acid polypeptide reads, in one-letter code: Small ribosomal subunit protein uS7 (156 aa).

The protein belongs to the universal ribosomal protein uS7 family. As to quaternary structure, part of the 30S ribosomal subunit. Contacts proteins S9 and S11.

In terms of biological role, one of the primary rRNA binding proteins, it binds directly to 16S rRNA where it nucleates assembly of the head domain of the 30S subunit. Is located at the subunit interface close to the decoding center, probably blocks exit of the E-site tRNA. In Geotalea uraniireducens (strain Rf4) (Geobacter uraniireducens), this protein is Small ribosomal subunit protein uS7.